The chain runs to 432 residues: NADH-quinone oxidoreductase subunit D (432 aa).

This sequence belongs to the complex I 49 kDa subunit family. NDH-1 is composed of 14 different subunits. Subunits NuoB, C, D, E, F, and G constitute the peripheral sector of the complex.

It is found in the cell membrane. The enzyme catalyses a quinone + NADH + 5 H(+)(in) = a quinol + NAD(+) + 4 H(+)(out). In terms of biological role, NDH-1 shuttles electrons from NADH, via FMN and iron-sulfur (Fe-S) centers, to quinones in the respiratory chain. The immediate electron acceptor for the enzyme in this species is believed to be a menaquinone. Couples the redox reaction to proton translocation (for every two electrons transferred, four hydrogen ions are translocated across the cytoplasmic membrane), and thus conserves the redox energy in a proton gradient. In Mycobacterium marinum (strain ATCC BAA-535 / M), this protein is NADH-quinone oxidoreductase subunit D.